Here is a 436-residue protein sequence, read N- to C-terminus: Xylose isomerase (436 aa).

Catalysis depends on residues H100 and D103. The Mg(2+) site is built by E231, E267, H270, D295, D306, D308, and D338.

It belongs to the xylose isomerase family. Homotetramer. Mg(2+) is required as a cofactor.

It localises to the cytoplasm. The catalysed reaction is alpha-D-xylose = alpha-D-xylulofuranose. This Rhizobium etli (strain ATCC 51251 / DSM 11541 / JCM 21823 / NBRC 15573 / CFN 42) protein is Xylose isomerase.